Here is a 259-residue protein sequence, read N- to C-terminus: HTH-type transcriptional regulator Rv1931c (259 aa).

The segment covering 104–121 has biased composition (basic residues); sequence SHRRHRPRAGTGRRRPRH. The disordered stretch occupies residues 104–170; sequence SHRRHRPRAG…GAGGHRGRAG (67 aa). An HTH araC/xylS-type domain is found at 174–257; it reads RIGELAQRAA…GISPDQYRKA (84 aa). 2 consecutive DNA-binding regions (H-T-H motif) follow at residues 176–197 and 224–247; these read GELAQRAAMSPRHFTRVFSDEV and VVAIAARCGFGTAETMRRSFIRRV.

Functionally, controls the expression of genes important for virulence. The sequence is that of HTH-type transcriptional regulator Rv1931c from Mycobacterium tuberculosis (strain ATCC 25618 / H37Rv).